The following is a 659-amino-acid chain: QWRF motif-containing protein 2 (659 aa).

5 disordered regions span residues 1–125 (MVAA…SVTV), 157–221 (SKKK…LDCG), 291–317 (DTDS…ISKS), 340–359 (RLQD…TSSI), and 371–429 (SDAV…NAYN). The segment covering 42–72 (SPSPSHSVSSTTTTTTTTTTTTSSSSSSSSS) has biased composition (low complexity). Residues 90–102 (RSTTNSASNSIKT) are compositionally biased toward polar residues. Residues 172–190 (STPERRRSTPVRDQRENSK) show a composition bias toward basic and acidic residues. Polar residues-rich tracts occupy residues 206 to 216 (SESVVPNSLSR) and 291 to 303 (DTDS…TNGV). Composition is skewed to low complexity over residues 345 to 359 (GSPL…TSSI) and 401 to 418 (ATTT…SRAR). Residues 468–471 (QWRF) carry the QWRF motif motif.

The protein belongs to the QWRF family.

The protein is QWRF motif-containing protein 2 (QWRF2) of Arabidopsis thaliana (Mouse-ear cress).